A 314-amino-acid polypeptide reads, in one-letter code: Probable cell division protein WhiA (314 aa).

Positions 274 to 308 (SLKELGEMVSTGPISKSGVNHRLRKLNDLADKIRN) form a DNA-binding region, H-T-H motif.

Belongs to the WhiA family.

Functionally, involved in cell division and chromosome segregation. This is Probable cell division protein WhiA from Staphylococcus aureus (strain Mu3 / ATCC 700698).